We begin with the raw amino-acid sequence, 853 residues long: Translation initiation factor IF-2 (853 aa).

Disordered stretches follow at residues 1 to 68 (MSDT…ASDG) and 94 to 265 (LEQR…DKTS). Polar residues predominate over residues 20–32 (RKTSGTVKQSFSH). The span at 94–161 (LEQRKAEEAS…ASREAVERPS (68 aa)) shows a compositional bias: basic and acidic residues. Low complexity predominate over residues 163–176 (APRAAPAAQTPPAA). 2 stretches are compositionally biased toward basic and acidic residues: residues 196-219 (PARDDRADRAREVATKPSRGDAER) and 245-265 (RARERERERRVGGGDSNDKTS). A tr-type G domain is found at 347–515 (PRAPIVTIMG…AISIQAEILE (169 aa)). The interval 356 to 363 (GHVDHGKT) is G1. 356-363 (GHVDHGKT) is a binding site for GTP. The tract at residues 381–385 (GITQH) is G2. The interval 403 to 406 (DTPG) is G3. GTP-binding positions include 403–407 (DTPGH) and 457–460 (TKSD). Residues 457–460 (TKSD) form a G4 region. A G5 region spans residues 493 to 495 (SAK).

It belongs to the TRAFAC class translation factor GTPase superfamily. Classic translation factor GTPase family. IF-2 subfamily.

It localises to the cytoplasm. Its function is as follows. One of the essential components for the initiation of protein synthesis. Protects formylmethionyl-tRNA from spontaneous hydrolysis and promotes its binding to the 30S ribosomal subunits. Also involved in the hydrolysis of GTP during the formation of the 70S ribosomal complex. This Hyphomonas neptunium (strain ATCC 15444) protein is Translation initiation factor IF-2.